The primary structure comprises 493 residues: Galactose-1-phosphate uridylyltransferase (493 aa).

This sequence belongs to the galactose-1-phosphate uridylyltransferase type 2 family.

The protein localises to the cytoplasm. It catalyses the reaction alpha-D-galactose 1-phosphate + UDP-alpha-D-glucose = alpha-D-glucose 1-phosphate + UDP-alpha-D-galactose. Its pathway is carbohydrate metabolism; galactose metabolism. The chain is Galactose-1-phosphate uridylyltransferase from Streptococcus pneumoniae (strain CGSP14).